Reading from the N-terminus, the 341-residue chain is Mediator of RNA polymerase II transcription subunit 18 (341 aa).

The segment at 139 to 216 (KVMDKEKVQS…KEHSEGNASQ (78 aa)) is disordered. The segment covering 163-211 (EDKKENIKKEESGEEVKGSGEEVKGSGEEVKGSGEEAKKSGEEAKEHSE) has biased composition (basic and acidic residues).

Belongs to the Mediator complex subunit 18 family. Component of the Mediator complex.

The protein localises to the nucleus. Its function is as follows. Component of the Mediator complex, a coactivator involved in the regulated transcription of nearly all RNA polymerase II-dependent genes. Mediator functions as a bridge to convey information from gene-specific regulatory proteins to the basal RNA polymerase II transcription machinery. Mediator is recruited to promoters by direct interactions with regulatory proteins and serves as a scaffold for the assembly of a functional preinitiation complex with RNA polymerase II and the general transcription factors. The polypeptide is Mediator of RNA polymerase II transcription subunit 18 (SRB5) (Debaryomyces hansenii (strain ATCC 36239 / CBS 767 / BCRC 21394 / JCM 1990 / NBRC 0083 / IGC 2968) (Yeast)).